Here is a 189-residue protein sequence, read N- to C-terminus: Xanthine phosphoribosyltransferase (189 aa).

Xanthine contacts are provided by L20 and N27. 128–132 (ANGQA) provides a ligand contact to 5-phospho-alpha-D-ribose 1-diphosphate. K156 contributes to the xanthine binding site.

It belongs to the purine/pyrimidine phosphoribosyltransferase family. Xpt subfamily. In terms of assembly, homodimer.

The protein localises to the cytoplasm. It catalyses the reaction XMP + diphosphate = xanthine + 5-phospho-alpha-D-ribose 1-diphosphate. The protein operates within purine metabolism; XMP biosynthesis via salvage pathway; XMP from xanthine: step 1/1. Functionally, converts the preformed base xanthine, a product of nucleic acid breakdown, to xanthosine 5'-monophosphate (XMP), so it can be reused for RNA or DNA synthesis. This Leuconostoc mesenteroides subsp. mesenteroides (strain ATCC 8293 / DSM 20343 / BCRC 11652 / CCM 1803 / JCM 6124 / NCDO 523 / NBRC 100496 / NCIMB 8023 / NCTC 12954 / NRRL B-1118 / 37Y) protein is Xanthine phosphoribosyltransferase.